Here is a 347-residue protein sequence, read N- to C-terminus: NADH-ubiquinone oxidoreductase chain 2 (347 aa).

The next 10 helical transmembrane spans lie at 1-21, 25-45, 59-79, 111-131, 149-169, 178-198, 201-221, 237-257, 276-296, and 326-346; these read MNPL…AIVA, HWLM…PILM, YFLT…MNLV, FHFW…LILL, INLD…GWGG, IMAY…AYNP, TLLN…MFML, MPLL…LPPL, VILP…YMRL, and LSPL…LALL.

The protein belongs to the complex I subunit 2 family. In terms of assembly, core subunit of respiratory chain NADH dehydrogenase (Complex I) which is composed of 45 different subunits. Interacts with TMEM242.

The protein localises to the mitochondrion inner membrane. The catalysed reaction is a ubiquinone + NADH + 5 H(+)(in) = a ubiquinol + NAD(+) + 4 H(+)(out). Core subunit of the mitochondrial membrane respiratory chain NADH dehydrogenase (Complex I) which catalyzes electron transfer from NADH through the respiratory chain, using ubiquinone as an electron acceptor. Essential for the catalytic activity and assembly of complex I. This chain is NADH-ubiquinone oxidoreductase chain 2, found in Pteropus pumilus (Little golden-mantled flying fox).